The primary structure comprises 865 residues: Alanine--tRNA ligase (865 aa).

His554, His558, Cys656, and His660 together coordinate Zn(2+).

Belongs to the class-II aminoacyl-tRNA synthetase family. Requires Zn(2+) as cofactor.

Its subcellular location is the cytoplasm. It carries out the reaction tRNA(Ala) + L-alanine + ATP = L-alanyl-tRNA(Ala) + AMP + diphosphate. In terms of biological role, catalyzes the attachment of alanine to tRNA(Ala) in a two-step reaction: alanine is first activated by ATP to form Ala-AMP and then transferred to the acceptor end of tRNA(Ala). Also edits incorrectly charged Ser-tRNA(Ala) and Gly-tRNA(Ala) via its editing domain. This chain is Alanine--tRNA ligase, found in Idiomarina loihiensis (strain ATCC BAA-735 / DSM 15497 / L2-TR).